We begin with the raw amino-acid sequence, 146 residues long: Large ribosomal subunit protein uL13 (146 aa).

The interval 125–146 (YAGPKHPHAAQQPKVYEPRPRG) is disordered.

The protein belongs to the universal ribosomal protein uL13 family. As to quaternary structure, part of the 50S ribosomal subunit.

Its function is as follows. This protein is one of the early assembly proteins of the 50S ribosomal subunit, although it is not seen to bind rRNA by itself. It is important during the early stages of 50S assembly. The polypeptide is Large ribosomal subunit protein uL13 (Roseiflexus sp. (strain RS-1)).